A 543-amino-acid polypeptide reads, in one-letter code: MWRRTYLLLLVIRVYFALSPSYLHPDENFQGPEVFAGRVLSYPSKLPWEFTADKPIRSVFPLWPIYDVPISLLKWFYAETGAPTPPPPQVIYYVLRGVMFLLGFVLEDWAVYELVPFARHRRATVVLVASSYVTWTYQTHTFSNSLETLLVAWGLVLIRRIVVNKRRSSVFSCAVLAFIAVAGVFNRITFPAFLAIPGLQLLPHFRRKSVSPPVSLFSFVGFGIFFFGIAVLVDTAFYRPSATLWDALHSPIITPINNLLYNSDSSNLALHGLHPHYQHFLVNLPQLLGPAYAMMAISLWGLPVIPTWLKNARAVSALSATVILSIFPHQEPRFLIPCVPLLLSCFRVSKSRLFLAVWMIFNAALGFLMGIYHQGGVVPAQLAMPSIISASSVESNDALPGEIPVVSATVFWWKTYSPPLWLLGTNDNSSLNIETRDLMGVPGPNLIEELEKLLPPCNVAGSKQAGSVFVVAPKSAAFLDRYTFLPSSSSVSSALELHELWSYRKHINLDDLDFGTEGVYPTLRRVIGRRGLAVWRAKRAGCN.

Transmembrane regions (helical) follow at residues 5–25 (TYLL…YLHP), 98–118 (VMFL…VPFA), 176–196 (LAFI…FLAI), 213–233 (PVSL…AVLV), and 353–373 (LFLA…GIYH). A glycan (N-linked (GlcNAc...) asparagine) is linked at N428.

The protein belongs to the glycosyltransferase 22 family. PIGZ subfamily.

The protein localises to the endoplasmic reticulum membrane. Its pathway is glycolipid biosynthesis; glycosylphosphatidylinositol-anchor biosynthesis. Functionally, alpha-1,2-mannosyltransferase involved in glycosylphosphatidylinositol-anchor biosynthesis. Transfers a fourth mannose to trimannosyl-GPIs during GPI precursor assembly. The presence of a fourth mannose in GPI is essential in fungi. This is GPI mannosyltransferase 4 (smp3) from Aspergillus oryzae (strain ATCC 42149 / RIB 40) (Yellow koji mold).